The sequence spans 464 residues: Dihydrolipoyl dehydrogenase (464 aa).

Residues 36-44 (EGAALGGTC), lysine 53, and alanine 119 contribute to the FAD site. Cysteine 44 and cysteine 49 are disulfide-bonded. NAD(+) contacts are provided by residues 184–188 (GGGYI), glutamate 207, and 269–272 (AVGR). FAD-binding residues include aspartate 311 and alanine 319. Residue histidine 443 is the Proton acceptor of the active site.

The protein belongs to the class-I pyridine nucleotide-disulfide oxidoreductase family. As to quaternary structure, homodimer. FAD is required as a cofactor.

The protein localises to the cytoplasm. The enzyme catalyses N(6)-[(R)-dihydrolipoyl]-L-lysyl-[protein] + NAD(+) = N(6)-[(R)-lipoyl]-L-lysyl-[protein] + NADH + H(+). The branched-chain alpha-keto dehydrogenase complex catalyzes the overall conversion of alpha-keto acids to acyl-CoA and CO(2). It contains multiple copies of 3 enzymatic components: branched-chain alpha-keto acid decarboxylase (E1), lipoamide acyltransferase (E2) and lipoamide dehydrogenase (E3). The chain is Dihydrolipoyl dehydrogenase from Pseudomonas aeruginosa (strain ATCC 15692 / DSM 22644 / CIP 104116 / JCM 14847 / LMG 12228 / 1C / PRS 101 / PAO1).